We begin with the raw amino-acid sequence, 248 residues long: Ubiquinone biosynthesis O-methyltransferase (248 aa).

The S-adenosyl-L-methionine site is built by Arg41, Gly72, Asp93, and Met136.

Belongs to the methyltransferase superfamily. UbiG/COQ3 family.

It catalyses the reaction a 3-demethylubiquinol + S-adenosyl-L-methionine = a ubiquinol + S-adenosyl-L-homocysteine + H(+). It carries out the reaction a 3-(all-trans-polyprenyl)benzene-1,2-diol + S-adenosyl-L-methionine = a 2-methoxy-6-(all-trans-polyprenyl)phenol + S-adenosyl-L-homocysteine + H(+). Its pathway is cofactor biosynthesis; ubiquinone biosynthesis. In terms of biological role, O-methyltransferase that catalyzes the 2 O-methylation steps in the ubiquinone biosynthetic pathway. The protein is Ubiquinone biosynthesis O-methyltransferase of Sinorhizobium medicae (strain WSM419) (Ensifer medicae).